The primary structure comprises 420 residues: Phosphoribosylamine--glycine ligase (420 aa).

The region spanning 108–314 (KQIMVKYGIP…FAQNIDDILH (207 aa)) is the ATP-grasp domain. 134–195 (IEEQGAPIVV…EEFLAGEEFS (62 aa)) is a binding site for ATP. Mg(2+) contacts are provided by glutamate 284 and asparagine 286.

It belongs to the GARS family. Mg(2+) is required as a cofactor. It depends on Mn(2+) as a cofactor.

The catalysed reaction is 5-phospho-beta-D-ribosylamine + glycine + ATP = N(1)-(5-phospho-beta-D-ribosyl)glycinamide + ADP + phosphate + H(+). Its pathway is purine metabolism; IMP biosynthesis via de novo pathway; N(1)-(5-phospho-D-ribosyl)glycinamide from 5-phospho-alpha-D-ribose 1-diphosphate: step 2/2. This chain is Phosphoribosylamine--glycine ligase, found in Streptococcus suis.